The sequence spans 171 residues: 3-hydroxydecanoyl-[acyl-carrier-protein] dehydratase (171 aa).

His-70 is a catalytic residue.

The protein belongs to the thioester dehydratase family. FabA subfamily. Homodimer.

The protein localises to the cytoplasm. It carries out the reaction a (3R)-hydroxyacyl-[ACP] = a (2E)-enoyl-[ACP] + H2O. The catalysed reaction is (3R)-hydroxydecanoyl-[ACP] = (2E)-decenoyl-[ACP] + H2O. It catalyses the reaction (2E)-decenoyl-[ACP] = (3Z)-decenoyl-[ACP]. The protein operates within lipid metabolism; fatty acid biosynthesis. In terms of biological role, necessary for the introduction of cis unsaturation into fatty acids. Catalyzes the dehydration of (3R)-3-hydroxydecanoyl-ACP to E-(2)-decenoyl-ACP and then its isomerization to Z-(3)-decenoyl-ACP. Can catalyze the dehydratase reaction for beta-hydroxyacyl-ACPs with saturated chain lengths up to 16:0, being most active on intermediate chain length. The polypeptide is 3-hydroxydecanoyl-[acyl-carrier-protein] dehydratase (Xanthomonas campestris pv. campestris (strain 8004)).